Reading from the N-terminus, the 368-residue chain is 4-hydroxy-3-methylbut-2-en-1-yl diphosphate synthase (flavodoxin) (368 aa).

[4Fe-4S] cluster contacts are provided by Cys-271, Cys-274, Cys-306, and Glu-313.

It belongs to the IspG family. [4Fe-4S] cluster serves as cofactor.

It catalyses the reaction (2E)-4-hydroxy-3-methylbut-2-enyl diphosphate + oxidized [flavodoxin] + H2O + 2 H(+) = 2-C-methyl-D-erythritol 2,4-cyclic diphosphate + reduced [flavodoxin]. It functions in the pathway isoprenoid biosynthesis; isopentenyl diphosphate biosynthesis via DXP pathway; isopentenyl diphosphate from 1-deoxy-D-xylulose 5-phosphate: step 5/6. Functionally, converts 2C-methyl-D-erythritol 2,4-cyclodiphosphate (ME-2,4cPP) into 1-hydroxy-2-methyl-2-(E)-butenyl 4-diphosphate. In Buchnera aphidicola subsp. Acyrthosiphon pisum (strain APS) (Acyrthosiphon pisum symbiotic bacterium), this protein is 4-hydroxy-3-methylbut-2-en-1-yl diphosphate synthase (flavodoxin).